Reading from the N-terminus, the 344-residue chain is Isopentenyl-diphosphate delta-isomerase (344 aa).

Residue arginine 9–lysine 10 participates in substrate binding. Residues alanine 65 to threonine 67, serine 95, and asparagine 124 contribute to the FMN site. Glutamine 154 serves as a coordination point for substrate. Glutamate 155 serves as a coordination point for Mg(2+). Residues lysine 185, threonine 215, glycine 259–arginine 261, and serine 280–glycine 281 each bind FMN.

It belongs to the IPP isomerase type 2 family. Homooctamer. Dimer of tetramers. Requires FMN as cofactor. The cofactor is NADPH. Mg(2+) serves as cofactor.

The protein resides in the cytoplasm. It catalyses the reaction isopentenyl diphosphate = dimethylallyl diphosphate. Involved in the biosynthesis of isoprenoids. Catalyzes the 1,3-allylic rearrangement of the homoallylic substrate isopentenyl (IPP) to its allylic isomer, dimethylallyl diphosphate (DMAPP). The polypeptide is Isopentenyl-diphosphate delta-isomerase (Lacticaseibacillus paracasei (strain ATCC 334 / BCRC 17002 / CCUG 31169 / CIP 107868 / KCTC 3260 / NRRL B-441) (Lactobacillus paracasei)).